A 389-amino-acid polypeptide reads, in one-letter code: S-adenosylmethionine synthase (389 aa).

His19 contacts ATP. Asp21 is a binding site for Mg(2+). Position 47 (Glu47) interacts with K(+). 2 residues coordinate L-methionine: Glu60 and Gln103. The segment at 103–113 (QSVDIAQGVSR) is flexible loop. ATP contacts are provided by residues 168–170 (DGK), 234–235 (RF), Asp243, 249–250 (RK), Ala266, and Lys270. Asp243 is a binding site for L-methionine. Lys274 provides a ligand contact to L-methionine.

Belongs to the AdoMet synthase family. As to quaternary structure, homotetramer; dimer of dimers. It depends on Mg(2+) as a cofactor. K(+) is required as a cofactor.

It localises to the cytoplasm. It catalyses the reaction L-methionine + ATP + H2O = S-adenosyl-L-methionine + phosphate + diphosphate. Its pathway is amino-acid biosynthesis; S-adenosyl-L-methionine biosynthesis; S-adenosyl-L-methionine from L-methionine: step 1/1. In terms of biological role, catalyzes the formation of S-adenosylmethionine (AdoMet) from methionine and ATP. The overall synthetic reaction is composed of two sequential steps, AdoMet formation and the subsequent tripolyphosphate hydrolysis which occurs prior to release of AdoMet from the enzyme. This Solidesulfovibrio magneticus (strain ATCC 700980 / DSM 13731 / RS-1) (Desulfovibrio magneticus) protein is S-adenosylmethionine synthase.